The sequence spans 130 residues: MADRILVHRLAVFARHGVLPEEERLGQRFYISLECRLDLAPAGRSDDVAATVSYADLAEIALDIATNRRFALIEALAEAIAETCLARFPRIETIAVRIDKPSAPIPAVLDYAAIEIVRGRSDSVATTETR.

Residues E22, Y54, and 73 to 74 (IE) contribute to the substrate site. K100 (proton donor/acceptor) is an active-site residue.

The protein belongs to the DHNA family.

The catalysed reaction is 7,8-dihydroneopterin = 6-hydroxymethyl-7,8-dihydropterin + glycolaldehyde. Its pathway is cofactor biosynthesis; tetrahydrofolate biosynthesis; 2-amino-4-hydroxy-6-hydroxymethyl-7,8-dihydropteridine diphosphate from 7,8-dihydroneopterin triphosphate: step 3/4. Functionally, catalyzes the conversion of 7,8-dihydroneopterin to 6-hydroxymethyl-7,8-dihydropterin. The polypeptide is Dihydroneopterin aldolase (folB) (Methylorubrum extorquens (strain ATCC 14718 / DSM 1338 / JCM 2805 / NCIMB 9133 / AM1) (Methylobacterium extorquens)).